A 743-amino-acid polypeptide reads, in one-letter code: MESIGDDDELRSKTVSLPRRISFTILLLLLLISLSTRVSGSLDKSGRRVIEARTGQDLIWVVQLSDLHFSVHHPERAIDFKNIVGPALALINPSLVLITGDLTDGKSKDMLTMKLNEDEWLEYESVMQDVVKRSGLNKSIFYDLRGNHDNFGVPSVGSSVDFFSKYSINGQMGRKGNVNTITVETSERKHLFVGIDTTMHIGLRGPTNLFGHPTDELLSSLDSHLSQWDNQSAKPVAKISFGHFPLSFTALSHSQKSLKDVFLKHSISAYLCGHLHSRFGKNLKRHHHSGGISLSDNDLFQLNMRQSGAESTSNCSFGALPAAEFWEWEMGDWRKNRAMRIMAIDRGHVSYVDLDFKSKPQKTIILPTFPLDSRFMSTSFARHKYECQHMISSSYDAIRAIVFSHSLVVEVVARVYDSSPGFDNLVMEAPMRKHGGDSSSSGATFFSLPWNYRAFEDPLPDRFWLQIEVTDIKGRLTLSEMRPFSINGLSSKVSWTWNEFRVMGCQWAALYYPILWPALYSLFLVFLIPKCIIIVFKKQYTLKKFIAKKGPITLVLWILQDLCRMPVVWFGYMAYLFYLIFFPWFSGEVFADSGDRAYMTIMGWVVTSSGADRKHEYIGQPDVMVVVIPHVVFVVIPSVLVVCCLVAEREIYKDHIRTVSGKKEDDHDRGRKKRSQRRSLLFSNRRLFRKSVLLASLALYWKHFKNCWALGRAYEMNVVHFPGYSLVVPLLLLYVICKTHKVP.

A signal peptide spans 1–40 (MESIGDDDELRSKTVSLPRRISFTILLLLLLISLSTRVSG). A divalent metal cation contacts are provided by D66, H68, and D101. 5 helical membrane-spanning segments follow: residues 514-534 (ILWPALYSLFLVFLIPKCIII), 565-585 (MPVVWFGYMAYLFYLIFFPWF), 623-643 (VMVVVIPHVVFVVIPSVLVVC), 687-704 (LFRKSVLLASLALYWKHF), and 716-736 (MNVVHFPGYSLVVPLLLLYVI).

The protein belongs to the metallophosphoesterase superfamily. Requires a divalent metal cation as cofactor.

Its subcellular location is the membrane. This is Putative metallophosphoesterase At3g03305 from Arabidopsis thaliana (Mouse-ear cress).